We begin with the raw amino-acid sequence, 419 residues long: Pyrrolysine--tRNA ligase (419 aa).

The disordered stretch occupies residues 100-157 (APKVKKAMPKSVSRAPKPLENSVSAKASTNTSRSVPSPAKSTPNSSVPASAPAPSLTR). Over residues 120–141 (NSVSAKASTNTSRSVPSPAKST) the composition is skewed to polar residues. A compositionally biased stretch (low complexity) spans 142 to 154 (PNSSVPASAPAPS).

Belongs to the class-II aminoacyl-tRNA synthetase family.

The protein localises to the cytoplasm. The enzyme catalyses tRNA(Pyl) + L-pyrrolysine + ATP = L-pyrrolysyl-tRNA(Pyl) + AMP + diphosphate. Functionally, catalyzes the attachment of pyrrolysine to tRNA(Pyl). Pyrrolysine is a lysine derivative encoded by the termination codon UAG. This chain is Pyrrolysine--tRNA ligase (pylS), found in Methanosarcina barkeri.